We begin with the raw amino-acid sequence, 1025 residues long: Error-prone DNA polymerase (1025 aa).

It belongs to the DNA polymerase type-C family. DnaE2 subfamily.

The protein resides in the cytoplasm. It catalyses the reaction DNA(n) + a 2'-deoxyribonucleoside 5'-triphosphate = DNA(n+1) + diphosphate. Functionally, DNA polymerase involved in damage-induced mutagenesis and translesion synthesis (TLS). It is not the major replicative DNA polymerase. The polypeptide is Error-prone DNA polymerase (Alkalilimnicola ehrlichii (strain ATCC BAA-1101 / DSM 17681 / MLHE-1)).